Consider the following 246-residue polypeptide: Eukaryotic translation initiation factor 6 (246 aa).

Residues serine 174 and serine 175 each carry the phosphoserine; by CK1 modification.

Belongs to the eIF-6 family. As to quaternary structure, monomer. Associates with the 60S ribosomal subunit. Phosphorylation at Ser-174 and Ser-175 promotes nuclear export.

The protein resides in the cytoplasm. The protein localises to the nucleus. Its subcellular location is the nucleolus. Functionally, binds to the 60S ribosomal subunit and prevents its association with the 40S ribosomal subunit to form the 80S initiation complex in the cytoplasm. Is also involved in ribosome biogenesis. Associates with pre-60S subunits in the nucleus and is involved in its nuclear export. The polypeptide is Eukaryotic translation initiation factor 6 (tif-6) (Neurospora crassa (strain ATCC 24698 / 74-OR23-1A / CBS 708.71 / DSM 1257 / FGSC 987)).